The primary structure comprises 95 residues: Acylphosphatase (95 aa).

One can recognise an Acylphosphatase-like domain in the interval 7-93; the sequence is TWQLFAHGRV…QLFDRFDWLP (87 aa). Catalysis depends on residues Arg-22 and Asn-40.

This sequence belongs to the acylphosphatase family.

It catalyses the reaction an acyl phosphate + H2O = a carboxylate + phosphate + H(+). The polypeptide is Acylphosphatase (acyP) (Cupriavidus metallidurans (strain ATCC 43123 / DSM 2839 / NBRC 102507 / CH34) (Ralstonia metallidurans)).